The primary structure comprises 1104 residues: Lon protease homolog, mitochondrial (1104 aa).

The N-terminal 58 residues, 1 to 58, are a transit peptide targeting the mitochondrion; that stretch reads MLPLRAFARLAQRPRLSRPTQLARSSLPRPSPSRPAAHYLALAPAPSTRFLHSSPPVL. Disordered regions lie at residues 8 to 144 and 275 to 295; these read ARLA…KEVA and EGSQ…SEVP. The span at 22 to 46 shows a compositional bias: low complexity; it reads LARSSLPRPSPSRPAAHYLALAPAP. Residues 80–103 are compositionally biased toward basic and acidic residues; that stretch reads KQDDQVEKPLPDAESSKSAEERAK. Over residues 104–128 the composition is skewed to low complexity; the sequence is SQSSKPDIKASSSDSVSSSAPAPGS. A compositionally biased stretch (gly residues) spans 129 to 139; the sequence is ADGGSPPGAGG. The region spanning 155 to 444 is the Lon N-terminal domain; it reads VLAIPITHRP…RALVLLKKEL (290 aa). Basic and acidic residues predominate over residues 281–291; sequence AKGEGEVKSFE. 597 to 604 contacts ATP; that stretch reads GPPGVGKT. The region spanning 895-1082 is the Lon proteolytic domain; the sequence is SPPAGVSTGL…RQVLHEAFRG (188 aa). Active-site residues include serine 987 and lysine 1030.

The protein belongs to the peptidase S16 family. In terms of assembly, homohexamer or homoheptamer. Organized in a ring with a central cavity.

It localises to the mitochondrion matrix. It carries out the reaction Hydrolysis of proteins in presence of ATP.. Functionally, ATP-dependent serine protease that mediates the selective degradation of misfolded, unassembled or oxidatively damaged polypeptides as well as certain short-lived regulatory proteins in the mitochondrial matrix. May also have a chaperone function in the assembly of inner membrane protein complexes. Participates in the regulation of mitochondrial gene expression and in the maintenance of the integrity of the mitochondrial genome. Binds to mitochondrial DNA in a site-specific manner. This Cryptococcus neoformans var. neoformans serotype D (strain JEC21 / ATCC MYA-565) (Filobasidiella neoformans) protein is Lon protease homolog, mitochondrial.